The following is a 668-amino-acid chain: Protein ENTREP3 (668 aa).

A run of 3 helical transmembrane segments spans residues 34–54 (LLTL…FSMV), 67–87 (SCPS…IVSW), and 91–111 (FTLV…LSMA). An N-linked (GlcNAc...) asparagine glycan is attached at asparagine 160. Residues 174 to 194 (LFSVCGLTICAAIICTLSAIV) form a helical membrane-spanning segment. Phosphoserine is present on residues serine 358 and serine 389. Disordered stretches follow at residues 386-419 (FEES…PTAA), 442-503 (RVPR…SSDT), and 550-570 (SAEK…SGPA). Positions 398-407 (AARSYSCSAP) are enriched in low complexity. Phosphoserine is present on serine 493. Position 574 is a phosphoserine (serine 574). 2 disordered regions span residues 597 to 620 (KAPD…WGRP) and 645 to 668 (GRRL…ETGL). Over residues 655–668 (HSLSLNGGSRETGL) the composition is skewed to polar residues.

Belongs to the ENTREP family. In terms of assembly, may interact with WWOX. Widely expressed.

It localises to the membrane. In Homo sapiens (Human), this protein is Protein ENTREP3.